The primary structure comprises 235 residues: MTHQKRLSVPKSWKVGKKGNKWISTTRPGPHSQARSLPLGIIIRDILKLVDNSREGKRILSEGKVLVDGIPRKDLRFPVGLFDVITLPLVNEAYRMLQDEKGRLTLHKLNETNVNKLCRINNKTTVKGGKFQLNLNDGTNIIGSNEYGTKDSLILSIPDKQVVKHLKFEVGNLAMVVGGQHSGETGKIMEIREVKSSRHNTVMISGETDFETIEDYVIVIGEDKPEIRLGGEISE.

The S4 RNA-binding domain maps to 37–100; the sequence is LPLGIIIRDI…NEAYRMLQDE (64 aa).

It belongs to the eukaryotic ribosomal protein eS4 family.

The polypeptide is Small ribosomal subunit protein eS4 (Methanosarcina acetivorans (strain ATCC 35395 / DSM 2834 / JCM 12185 / C2A)).